A 459-amino-acid chain; its full sequence is Argininosuccinate lyase (459 aa).

The protein belongs to the lyase 1 family. Argininosuccinate lyase subfamily.

The protein resides in the cytoplasm. It catalyses the reaction 2-(N(omega)-L-arginino)succinate = fumarate + L-arginine. Its pathway is amino-acid biosynthesis; L-arginine biosynthesis; L-arginine from L-ornithine and carbamoyl phosphate: step 3/3. This is Argininosuccinate lyase from Sulfurihydrogenibium sp. (strain YO3AOP1).